Consider the following 563-residue polypeptide: Arginine--tRNA ligase (563 aa).

Residues 123–133 (PNIAKDMHVGH) carry the 'HIGH' region motif.

This sequence belongs to the class-I aminoacyl-tRNA synthetase family. In terms of assembly, monomer.

Its subcellular location is the cytoplasm. The enzyme catalyses tRNA(Arg) + L-arginine + ATP = L-arginyl-tRNA(Arg) + AMP + diphosphate. The sequence is that of Arginine--tRNA ligase from Chlamydia trachomatis serovar A (strain ATCC VR-571B / DSM 19440 / HAR-13).